A 681-amino-acid chain; its full sequence is Sodium-dependent phosphate transporter 1 (681 aa).

6 helical membrane-spanning segments follow: residues 25 to 45 (NLWM…SVGA), 66 to 86 (ACIL…AKVS), 106 to 126 (LMAG…VASF), 162 to 182 (IVMS…ILFF), 201 to 221 (ALPI…MYTG), and 234 to 254 (GTIL…WFFV). The interval 266–295 (VKSSPSESPLMEKKNNLKDHEETKMAPGDV) is disordered. Ser-269 and Ser-273 each carry phosphoserine. Over residues 275–289 (LMEKKNNLKDHEETK) the composition is skewed to basic and acidic residues. 4 helical membrane passes run 513–533 (VSLL…FAHG), 561–581 (ATPI…LWVW), 602–622 (FSIE…GLPI), and 652–672 (IFMA…AIMA).

It belongs to the inorganic phosphate transporter (PiT) (TC 2.A.20) family. In terms of tissue distribution, ubiquitously expressed.

Its subcellular location is the cell membrane. It carries out the reaction 2 Na(+)(out) + phosphate(out) = 2 Na(+)(in) + phosphate(in). Sodium-phosphate symporter which preferentially transports the monovalent form of phosphate with a stoichiometry of two sodium ions per phosphate ion. May play a role in extracellular matrix and cartilage calcification as well as in vascular calcification. Essential for cell proliferation but this function is independent of its phosphate transporter activity. In Rattus norvegicus (Rat), this protein is Sodium-dependent phosphate transporter 1 (Slc20a1).